The sequence spans 435 residues: Putative F-box/kelch-repeat protein At1g20790 (435 aa).

The F-box domain occupies 1–49 (MKRLPLHLLDEILFNLDPKSLGKMRCTNKSINTHISDDPNFKFEYFSRI). 2 Kelch repeats span residues 192–238 (PVYV…CTGD) and 280–335 (LYWN…LFKP).

In Arabidopsis thaliana (Mouse-ear cress), this protein is Putative F-box/kelch-repeat protein At1g20790.